Consider the following 515-residue polypeptide: Anterior pharynx in excess protein 1 (515 aa).

Residues 1–26 (MTNFSSLLTTIFLCIISSATGSGTIE) form the signal peptide. Residues 27–392 (LLISSPQTVL…QASDELQLRL (366 aa)) are Extracellular-facing. The N-linked (GlcNAc...) asparagine glycan is linked to Asn123. Residues 130 to 172 (NLCSSNYHGKRCNRYCIANAKLHWECSTHGVRRCSAGWSGEDC) form the DSL domain. 14 cysteine pairs are disulfide-bonded: Cys132–Cys141, Cys145–Cys155, Cys163–Cys172, Cys177–Cys187, Cys181–Cys193, Cys195–Cys204, Cys213–Cys218, Cys228–Cys237, Cys244–Cys256, Cys250–Cys268, Cys270–Cys279, Cys288–Cys300, Cys294–Cys310, and Cys312–Cys321. 4 EGF-like domains span residues 173–205 (SNPICAGGCSNRGRCVAPNQCSCADGFNGTRCE), 203–238 (RCEQCLPRAGCVNGDCVNETPNTCKCRDGFIGDRCD), 240–280 (DIKI…SQCK), and 284–322 (SKVRCSAEHVCKNGGACISMDDTNIQCKCRRGFSGKFCE). An N-linked (GlcNAc...) asparagine glycan is attached at Asn200. The region spanning 325–349 (NHGDCSAMRCSAGETCQISGDFAIC) is the EGF-like 5; incomplete domain. Residues 393-413 (IAAICVLFSVCVIGLALVSFF) traverse the membrane as a helical segment. Topologically, residues 414 to 515 (FYMHSFSKWK…AADDESSFRV (102 aa)) are cytoplasmic. Disordered regions lie at residues 427–452 (SQQAGGSTILPTTTSIPMSTTSSGTG) and 466–494 (RGNAPGSSSDSEPDHHCPPPHRHSPPPAY). Positions 431–452 (GGSTILPTTTSIPMSTTSSGTG) are enriched in low complexity.

The protein resides in the cell membrane. Its subcellular location is the nucleus. It is found in the cytoplasm. In terms of biological role, probable ligand for lin-12/Notch and glp-1/Notch receptors and involved in the mediation of Notch signaling. Involved in the lin-12/Notch pathway signaling of cell fate in vulval precursor cells (VPCs), acting redundantly with dsl-1 and lag-2. Contributes to the establishment of the dorsal-ventral axis in early embryos. Involved in the specification of the blastomere cell ABp fate, probably acting as a signal from the P2 blastomere to the glp-1/Notch receptor on ABp and ABa. Probably acts as a signal, from the secondary vulval epithelial cells and the vulval muscle type 1 (vm1) cells, to activate the lin-12/Notch pathway in type 2 vulval muscle (vm2) cells, contributing to formation of the postsynaptic muscle plasma membrane extensions, known as muscle arms. Required for oocyte growth control, acting redundantly with lag-2, perhaps signaling via the glp-1/Notch pathway. Plays a somatic role in ovulation during adulthood, perhaps via lin-12/Notch signaling. Involved in establishing left-right asymmetry during intestinal organogenesis. In Caenorhabditis elegans, this protein is Anterior pharynx in excess protein 1 (apx-1).